Reading from the N-terminus, the 231-residue chain is Protein OPG061 (231 aa).

Belongs to the orthopoxvirus OPG058 family.

Its subcellular location is the host nucleus. The protein localises to the host nucleolus. The polypeptide is Protein OPG061 (OPG061) (Vaccinia virus (strain Western Reserve) (VACV)).